Consider the following 470-residue polypeptide: Coproporphyrinogen III oxidase (470 aa).

FAD-binding positions include 12–17 (GGGITG), 41–42 (EA), Lys-49, 63–66 (GPDS), Val-256, Trp-409, and 448–450 (VGI).

The protein belongs to the protoporphyrinogen/coproporphyrinogen oxidase family. Coproporphyrinogen III oxidase subfamily. Monomer. FAD serves as cofactor.

It is found in the cytoplasm. The protein resides in the cell membrane. The catalysed reaction is coproporphyrinogen III + 3 O2 = coproporphyrin III + 3 H2O2. The protein operates within porphyrin-containing compound metabolism; protoheme biosynthesis. Only weakly inhibited by acifluorfen, in contrast to eukaryotic family members. Weakly inhibited by methylacifluorfen. Bilirubin, biliverdin and hemin are all competitive inhibitors. Its function is as follows. Involved in coproporphyrin-dependent heme b biosynthesis. Catalyzes the oxidation of coproporphyrinogen III to coproporphyrin III. Can also oxidize protoporphyrinogen IX to protoporphyrin-IX. The specific activity for the oxidation of coproporphyrinogen III is much higher than that for the oxidation of protoporphyrinogen IX. Can also oxidize mesoporphyrinogen IX, but not uroporphyrinogen III. In Bacillus subtilis (strain 168), this protein is Coproporphyrinogen III oxidase.